The chain runs to 262 residues: Nurim (262 aa).

The Nuclear segment spans residues 1–4 (MAPA). A helical membrane pass occupies residues 5-28 (LLLIPAALASFILAFGTGVEFVRF). Residues 29-58 (TSLRPLLGRISESGSPDARQGWLAALQDQS) lie on the Perinuclear space side of the membrane. Residues 59 to 80 (ILVPLVWDLGLLLLFVGQHSLM) form a helical membrane-spanning segment. At 81–97 (ATETVKEWMSRYFGVLQ) the chain is on the nuclear side. Residues 98–114 (RSLYVACTALALQLVMR) traverse the membrane as a helical segment. Residues 115 to 133 (YWEPVPRGPVLWETRTEPW) are Perinuclear space-facing. Residues 134-164 (ATWVPLLCFVLHVISWLLIFSILLVFDYAEL) form a helical membrane-spanning segment. At 165-191 (MGLKQVYYHVLGLGEPLALKSPRALRL) the chain is on the nuclear side. Residues 192–210 (FSHLRHPVCVELLTVLWVV) traverse the membrane as a helical segment. Residues 211–216 (PTLGTD) are Perinuclear space-facing. A helical membrane pass occupies residues 217-234 (RLLLALLLTLYLGLAHGL). The Nuclear portion of the chain corresponds to 235–262 (DQHDLRYLRAQLQRKLHLLSRPQDGEAE).

This sequence belongs to the nurim family.

It is found in the nucleus inner membrane. In Bos taurus (Bovine), this protein is Nurim (NRM).